The sequence spans 337 residues: Fructose-1,6-bisphosphatase class 1 (337 aa).

Residues glutamate 89, aspartate 112, leucine 114, and aspartate 115 each coordinate Mg(2+). Residues 115–118, asparagine 208, tyrosine 241, and lysine 271 contribute to the substrate site; that span reads DGSS. Glutamate 277 is a binding site for Mg(2+).

The protein belongs to the FBPase class 1 family. In terms of assembly, homotetramer. Mg(2+) is required as a cofactor.

The protein localises to the cytoplasm. It carries out the reaction beta-D-fructose 1,6-bisphosphate + H2O = beta-D-fructose 6-phosphate + phosphate. Its pathway is carbohydrate biosynthesis; gluconeogenesis. The protein is Fructose-1,6-bisphosphatase class 1 of Yersinia pseudotuberculosis serotype O:1b (strain IP 31758).